Reading from the N-terminus, the 304-residue chain is Carnitine monooxygenase reductase subunit (304 aa).

The region spanning 1–93 (MEQLTPLIKR…SEPKNLFPLA (93 aa)) is the FAD-binding FR-type domain. The 2Fe-2S ferredoxin-type domain maps to 219-304 (FTVVLAKSNQ…AKGKKLVLDL (86 aa)). C253, C258, C261, and C291 together coordinate [2Fe-2S] cluster.

Belongs to the PDR/VanB family. CntB subfamily. Composed of an oxygenase subunit and a reductase subunit. FMN serves as cofactor. Requires [2Fe-2S] cluster as cofactor.

It catalyses the reaction (R)-carnitine + NADH + O2 + H(+) = (3R)-3-hydroxy-4-oxobutanoate + trimethylamine + NAD(+) + H2O. The catalysed reaction is (R)-carnitine + NADPH + O2 + H(+) = (3R)-3-hydroxy-4-oxobutanoate + trimethylamine + NADP(+) + H2O. It participates in amine and polyamine metabolism; carnitine metabolism. Its activity is regulated as follows. Inhibited by EDTA. Converts carnitine to trimethylamine and malic semialdehyde. Acts on both enantiomers. This Acinetobacter pittii (strain PHEA-2) protein is Carnitine monooxygenase reductase subunit.